The sequence spans 443 residues: ASTRA-associated protein 1 (443 aa).

WD repeat units lie at residues 23 to 67 (YHKR…PITH), 71 to 110 (EGNS…QLSI), 258 to 295 (HYPN…QLET), and 318 to 359 (KVHL…VEQT). Residues 372–391 (SSMGDLTNGSGSNTESSSKS) form a disordered region. Low complexity predominate over residues 378 to 391 (TNGSGSNTESSSKS).

Belongs to the WD repeat ASA1 family. In terms of assembly, component of the ASTRA chromatin remodeling machinery complex composed of at least RVB1, RVB2, TRA1, TEL2, TTI1 and TTI2.

It localises to the nucleus. Component of the ASTRA complex involved in chromatin remodeling. The sequence is that of ASTRA-associated protein 1 (ASA1) from Saccharomyces cerevisiae (strain RM11-1a) (Baker's yeast).